The chain runs to 869 residues: Ubiquitin carboxyl-terminal hydrolase 29 (869 aa).

Composition is skewed to polar residues over residues 104-120 and 140-150; these read SSTP…MSSQ and SLNTTPESGTP. The segment at 104 to 226 is disordered; it reads SSTPCESQQP…KAVTLREQEK (123 aa). Positions 187–200 are enriched in basic and acidic residues; the sequence is VNKDIPKENTPDQK. The span at 201-212 shows a compositional bias: basic residues; sequence KKSRRYYSRNRG. The segment covering 213–226 has biased composition (basic and acidic residues); it reads GKAEKAVTLREQEK. A USP domain is found at 289–826; it reads EGFPNLGNTC…SGYIFFYMHN (538 aa). The Nucleophile role is filled by C298. A disordered region spans residues 723–754; the sequence is SQEDPEKDLSRSPELQEDDPHSFAFGSDDSKD. H781 functions as the Proton acceptor in the catalytic mechanism.

The protein belongs to the peptidase C19 family. Predominantly expressed in brain and testis. Highest expression levels in adult brain, especially in the cerebral cortex and hippocampus, and in the forebrain, face, and limb buds of midgestation mouse embryos.

The protein localises to the cytoplasm. Its subcellular location is the perinuclear region. It catalyses the reaction Thiol-dependent hydrolysis of ester, thioester, amide, peptide and isopeptide bonds formed by the C-terminal Gly of ubiquitin (a 76-residue protein attached to proteins as an intracellular targeting signal).. Functionally, deubiquitinase involved in innate antiviral immunity by mediating 'Lys-48'-linked deubiquitination of CGAS, thereby promoting its stabilization. This chain is Ubiquitin carboxyl-terminal hydrolase 29, found in Mus musculus (Mouse).